A 220-amino-acid chain; its full sequence is Dual specificity protein phosphatase 19 (220 aa).

M1 bears the N-acetylmethionine mark. In terms of domain architecture, Tyrosine-protein phosphatase spans 64-205; it reads QVGVIKPWLL…LRTYQVGKES (142 aa). The active-site Phosphocysteine intermediate is C149.

It belongs to the protein-tyrosine phosphatase family. Non-receptor class dual specificity subfamily.

The catalysed reaction is O-phospho-L-tyrosyl-[protein] + H2O = L-tyrosyl-[protein] + phosphate. The enzyme catalyses O-phospho-L-seryl-[protein] + H2O = L-seryl-[protein] + phosphate. It carries out the reaction O-phospho-L-threonyl-[protein] + H2O = L-threonyl-[protein] + phosphate. Its activity is regulated as follows. Phosphatase activity is enhanced by Ca(2+) and Mn(2+). In terms of biological role, has a dual specificity toward Ser/Thr and Tyr-containing proteins. In Mus musculus (Mouse), this protein is Dual specificity protein phosphatase 19.